A 485-amino-acid chain; its full sequence is NADH-quinone oxidoreductase subunit N (485 aa).

A run of 14 helical transmembrane segments spans residues 8–28 (LIAL…MLSI), 35–55 (FLNA…LWFV), 71–91 (GFAM…CTFA), 105–125 (FYLL…ANHL), 127–147 (ALFL…GYAF), 159–179 (YTIL…LVYA), 203–223 (LLAG…LVPF), 235–255 (PAPV…GVVM), 271–291 (VVLG…ALSQ), 297–317 (LLGY…IALQ), 326–346 (VGVY…VVSL), 373–393 (AAVM…LGFI), 408–430 (WWLV…RVAV), and 455–475 (IVVL…QPLI).

It belongs to the complex I subunit 2 family. As to quaternary structure, NDH-1 is composed of 13 different subunits. Subunits NuoA, H, J, K, L, M, N constitute the membrane sector of the complex.

It localises to the cell inner membrane. It catalyses the reaction a quinone + NADH + 5 H(+)(in) = a quinol + NAD(+) + 4 H(+)(out). Functionally, NDH-1 shuttles electrons from NADH, via FMN and iron-sulfur (Fe-S) centers, to quinones in the respiratory chain. The immediate electron acceptor for the enzyme in this species is believed to be ubiquinone. Couples the redox reaction to proton translocation (for every two electrons transferred, four hydrogen ions are translocated across the cytoplasmic membrane), and thus conserves the redox energy in a proton gradient. In Salmonella dublin (strain CT_02021853), this protein is NADH-quinone oxidoreductase subunit N.